A 393-amino-acid polypeptide reads, in one-letter code: uncharacterized protein (393 aa).

Belongs to the Gfo/Idh/MocA family.

This is an uncharacterized protein from Bacillus subtilis (strain 168).